A 260-amino-acid chain; its full sequence is Imidazole glycerol phosphate synthase subunit HisF (260 aa).

Active-site residues include Asp11 and Asp130.

The protein belongs to the HisA/HisF family. Heterodimer of HisH and HisF.

The protein localises to the cytoplasm. It carries out the reaction 5-[(5-phospho-1-deoxy-D-ribulos-1-ylimino)methylamino]-1-(5-phospho-beta-D-ribosyl)imidazole-4-carboxamide + L-glutamine = D-erythro-1-(imidazol-4-yl)glycerol 3-phosphate + 5-amino-1-(5-phospho-beta-D-ribosyl)imidazole-4-carboxamide + L-glutamate + H(+). It functions in the pathway amino-acid biosynthesis; L-histidine biosynthesis; L-histidine from 5-phospho-alpha-D-ribose 1-diphosphate: step 5/9. Functionally, IGPS catalyzes the conversion of PRFAR and glutamine to IGP, AICAR and glutamate. The HisF subunit catalyzes the cyclization activity that produces IGP and AICAR from PRFAR using the ammonia provided by the HisH subunit. The polypeptide is Imidazole glycerol phosphate synthase subunit HisF (Psychrobacter arcticus (strain DSM 17307 / VKM B-2377 / 273-4)).